The primary structure comprises 160 residues: Cytochrome b6-f complex subunit 4 (160 aa).

The next 3 membrane-spanning stretches (helical) occupy residues 36 to 56, 95 to 115, and 131 to 151; these read LLYI…GLAV, LLGV…PFIE, and AVFL…TFPI.

The protein belongs to the cytochrome b family. PetD subfamily. The 4 large subunits of the cytochrome b6-f complex are cytochrome b6, subunit IV (17 kDa polypeptide, petD), cytochrome f and the Rieske protein, while the 4 small subunits are petG, petL, petM and petN. The complex functions as a dimer.

It is found in the plastid. Its subcellular location is the cyanelle thylakoid membrane. In terms of biological role, component of the cytochrome b6-f complex, which mediates electron transfer between photosystem II (PSII) and photosystem I (PSI), cyclic electron flow around PSI, and state transitions. This chain is Cytochrome b6-f complex subunit 4, found in Cyanophora paradoxa.